A 490-amino-acid polypeptide reads, in one-letter code: Bifunctional protein HldE (490 aa).

Residues 1 to 330 (MSRFDTLLQS…RKILPHASLA (330 aa)) form a ribokinase region. Residue 205-208 (NRKE) coordinates ATP. Aspartate 275 is a catalytic residue. Positions 358–490 (FTNGCFDILH…LVEKAREGTT (133 aa)) are cytidylyltransferase.

In the N-terminal section; belongs to the carbohydrate kinase PfkB family. It in the C-terminal section; belongs to the cytidylyltransferase family. As to quaternary structure, homodimer.

It carries out the reaction D-glycero-beta-D-manno-heptose 7-phosphate + ATP = D-glycero-beta-D-manno-heptose 1,7-bisphosphate + ADP + H(+). It catalyses the reaction D-glycero-beta-D-manno-heptose 1-phosphate + ATP + H(+) = ADP-D-glycero-beta-D-manno-heptose + diphosphate. It participates in nucleotide-sugar biosynthesis; ADP-L-glycero-beta-D-manno-heptose biosynthesis; ADP-L-glycero-beta-D-manno-heptose from D-glycero-beta-D-manno-heptose 7-phosphate: step 1/4. The protein operates within nucleotide-sugar biosynthesis; ADP-L-glycero-beta-D-manno-heptose biosynthesis; ADP-L-glycero-beta-D-manno-heptose from D-glycero-beta-D-manno-heptose 7-phosphate: step 3/4. Catalyzes the phosphorylation of D-glycero-D-manno-heptose 7-phosphate at the C-1 position to selectively form D-glycero-beta-D-manno-heptose-1,7-bisphosphate. Functionally, catalyzes the ADP transfer from ATP to D-glycero-beta-D-manno-heptose 1-phosphate, yielding ADP-D-glycero-beta-D-manno-heptose. This is Bifunctional protein HldE from Rhodopseudomonas palustris (strain BisB5).